Reading from the N-terminus, the 615-residue chain is Zinc finger protein 181 (615 aa).

One can recognise a KRAB domain in the interval Val48–Pro120. Residues Lys153 and Lys170 each participate in a glycyl lysine isopeptide (Lys-Gly) (interchain with G-Cter in SUMO2) cross-link. 11 C2H2-type zinc fingers span residues Tyr281–His303, Tyr309–His331, Tyr337–His359, Tyr365–His387, Tyr393–His415, Tyr421–His443, Tyr449–His471, Phe477–His499, Tyr505–His527, Tyr533–His555, and Tyr561–His583.

The protein belongs to the krueppel C2H2-type zinc-finger protein family.

Its subcellular location is the nucleus. Functionally, may be involved in transcriptional regulation. The sequence is that of Zinc finger protein 181 (ZNF181) from Pongo abelii (Sumatran orangutan).